Here is a 491-residue protein sequence, read N- to C-terminus: UDP-N-acetylmuramoyl-L-alanyl-D-glutamate--2,6-diaminopimelate ligase (491 aa).

UDP-N-acetyl-alpha-D-muramoyl-L-alanyl-D-glutamate is bound at residue Ser-30. Position 108 to 114 (108 to 114 (GTNGKTT)) interacts with ATP. Residues Asn-149, 150 to 151 (TT), Ser-177, Gln-183, and Arg-185 contribute to the UDP-N-acetyl-alpha-D-muramoyl-L-alanyl-D-glutamate site. Lys-217 bears the N6-carboxylysine mark. Residues Arg-383, 407-410 (DNPR), Gly-458, and Glu-462 each bind meso-2,6-diaminopimelate. The Meso-diaminopimelate recognition motif motif lies at 407-410 (DNPR).

Belongs to the MurCDEF family. MurE subfamily. It depends on Mg(2+) as a cofactor. In terms of processing, carboxylation is probably crucial for Mg(2+) binding and, consequently, for the gamma-phosphate positioning of ATP.

It localises to the cytoplasm. The enzyme catalyses UDP-N-acetyl-alpha-D-muramoyl-L-alanyl-D-glutamate + meso-2,6-diaminopimelate + ATP = UDP-N-acetyl-alpha-D-muramoyl-L-alanyl-gamma-D-glutamyl-meso-2,6-diaminopimelate + ADP + phosphate + H(+). It participates in cell wall biogenesis; peptidoglycan biosynthesis. Catalyzes the addition of meso-diaminopimelic acid to the nucleotide precursor UDP-N-acetylmuramoyl-L-alanyl-D-glutamate (UMAG) in the biosynthesis of bacterial cell-wall peptidoglycan. The chain is UDP-N-acetylmuramoyl-L-alanyl-D-glutamate--2,6-diaminopimelate ligase from Listeria monocytogenes serotype 4b (strain F2365).